The following is a 224-amino-acid chain: MVDRPLKQRFVLDTSLFLTPEIRSGDEDLEAACLDLLDLISEAKLVHNISCYMPPSIQAELTTMLEDRAISDEVLTKLDTWVITKSPAHHEVRIPADLVYEFIDEMSERVDRGLRVSEKAVRKAEESRAETVEEHDHMTEVDKVISDLRDEYRDTLRQGVLDSREDFDLLILAQELDAGVVTEDQGIINWAEDFGLRYLKGRNFPPLLREYLAADDPDRWRDES.

The protein belongs to the HARP family.

It catalyses the reaction Endonucleolytic cleavage of RNA, removing 5'-extranucleotides from tRNA precursor.. RNA-free RNase P that catalyzes the removal of the 5'-leader sequence from pre-tRNA to produce the mature 5'-terminus. This is RNA-free ribonuclease P from Haloarcula marismortui (strain ATCC 43049 / DSM 3752 / JCM 8966 / VKM B-1809) (Halobacterium marismortui).